Here is a 311-residue protein sequence, read N- to C-terminus: Olfactory receptor 5L2 (311 aa).

Topologically, residues 1 to 25 are extracellular; that stretch reads MGKENCTTVAEFILLGLSDVPELRV. The N-linked (GlcNAc...) asparagine glycan is linked to Asn-5. A helical membrane pass occupies residues 26 to 46; that stretch reads CLFLLFLLIYGVTLLANLGMT. Residues 47–54 lie on the Cytoplasmic side of the membrane; the sequence is ALIQVSSR. The chain crosses the membrane as a helical span at residues 55–75; it reads LHTPVYFFLSHLSFVDFCYSS. Over 76–99 the chain is Extracellular; sequence IIVPKMLANIFNKDKAISFLGCMV. An intrachain disulfide couples Cys-97 to Cys-189. The chain crosses the membrane as a helical span at residues 100-120; that stretch reads QFYLFCTCGVTEVFLLAVMAY. Residues 121–139 lie on the Cytoplasmic side of the membrane; it reads DRFVAICNPLLYMVTMSQK. Residues 140–160 form a helical membrane-spanning segment; it reads LRVELTSCCYFCGTVCSLIHS. The Extracellular portion of the chain corresponds to 161–196; sequence SLALRILFYRSNVINHFFCDLPPLLSLACSDVTVNE. An N-linked (GlcNAc...) asparagine glycan is attached at Asn-195. A helical transmembrane segment spans residues 197 to 217; sequence TLLFLVATLNESVTIMIILTS. At 218 to 237 the chain is on the cytoplasmic side; the sequence is YLLILTTILKIHSAESRHKA. Residues 238–258 traverse the membrane as a helical segment; it reads FSTCASHLTAITVSHGTILYI. At 259–271 the chain is on the extracellular side; that stretch reads YCRPSSGNSGDVD. A helical membrane pass occupies residues 272–292; it reads KVATVFYTVVIPMLNPLIYSL. The Cytoplasmic segment spans residues 293 to 311; that stretch reads RNKDVNKALRKVMGSKIHS.

It belongs to the G-protein coupled receptor 1 family.

It localises to the cell membrane. Its function is as follows. Odorant receptor. The protein is Olfactory receptor 5L2 (OR5L2) of Homo sapiens (Human).